The chain runs to 761 residues: MITTHNLGFPRIGAKRELKFAQEDYWKGRISQEELLNVGAELRQRHWRNQSQLDLTPVGDFSFYDQVLDMSFTLGVIPERVSRLQGGELDNYFRVARGRSAQDSDCHCVHAGEMTKWFDTNYHYIVPEFTADTAFSLNPSRLLAEIAEAKQTGATIKPVIIGPVTYLWLGKSKDSSNKLDLLERLLPVYAALLDVLANQGVEWVQIDEPILVTELDAEWKYALNLAYHTLKSSKAKLLLATYFGQLQDNLQLACELPVGGLHVDAINGRAEIGKLIDWLPSHKVLSLGVVNGRNIWKTDLNQTLDWLQPVYDKLQSRLWLAPSCSLLHSPVDLDSEEKMDAEIKSWLAFALQKLDEVKILATALSEGRNTVADALKENQDCVSSRKHSPRVHNPAVKEAVEAITAEMGDRRSDYQTRAARQAQRLQLPAFPTTTIGSFPQTADIRNARRRYRQGELQDNEYRTLMQQEIERCVREQENLGLDVLVHGEAERNDMVEYFGEQLDGYVFSQFGWVQSYGSRCVKPPIIFGDISRPQAMTVEWIKYAQSLTDRPMKGMLTGPVTILNWSFVRDDQPRALTCYQLALAIRAEVQDLERAGVRIIQIDEAALREGLPLRRAQWREYLQWAVSSFRIAANGVADETQIHTHMCYSEFNDIIEAIAGMDADVITIETSRSDMELLDAFDNFKYPNEIGPGVYDIHSPNIPSETHIVQLMRKAAERIPAHRLWVNPDCGLKTRNWEEVRPALQNMVNAAKQLRADVVAA.

5-methyltetrahydropteroyltri-L-glutamate-binding positions include 16-19 (RELK) and Lys-116. Residues 435–437 (IGS) and Glu-488 contribute to the L-homocysteine site. L-methionine-binding positions include 435 to 437 (IGS) and Glu-488. 5-methyltetrahydropteroyltri-L-glutamate contacts are provided by residues 519-520 (RC) and Trp-565. Asp-603 serves as a coordination point for L-homocysteine. Asp-603 contacts L-methionine. Glu-609 contributes to the 5-methyltetrahydropteroyltri-L-glutamate binding site. Zn(2+) is bound by residues His-645, Cys-647, and Glu-669. His-698 acts as the Proton donor in catalysis. Residue Cys-730 coordinates Zn(2+).

This sequence belongs to the vitamin-B12 independent methionine synthase family. Zn(2+) serves as cofactor.

It catalyses the reaction 5-methyltetrahydropteroyltri-L-glutamate + L-homocysteine = tetrahydropteroyltri-L-glutamate + L-methionine. The protein operates within amino-acid biosynthesis; L-methionine biosynthesis via de novo pathway; L-methionine from L-homocysteine (MetE route): step 1/1. In terms of biological role, catalyzes the transfer of a methyl group from 5-methyltetrahydrofolate to homocysteine resulting in methionine formation. This Hahella chejuensis (strain KCTC 2396) protein is 5-methyltetrahydropteroyltriglutamate--homocysteine methyltransferase.